Here is a 55-residue protein sequence, read N- to C-terminus: Small integral membrane protein 27 (55 aa).

A helical membrane pass occupies residues 11–31 (WIYSVLLLAIVLISWGCIIYA).

It is found in the membrane. The protein is Small integral membrane protein 27 of Homo sapiens (Human).